The following is a 91-amino-acid chain: Conotoxin VnMKLT1-021 (91 aa).

Positions 1–22 (MKLTCVMIVAVLFLTAWTFVTA) are cleaved as a signal peptide. A propeptide spanning residues 23–57 (DDPRDGPDTAVGWRKLFSEARDEMKNREASKLNER) is cleaved from the precursor. Disulfide bonds link Cys-59-Cys-78, Cys-66-Cys-82, and Cys-77-Cys-86.

This sequence belongs to the conotoxin O1 superfamily. In terms of tissue distribution, expressed by the venom duct.

It is found in the secreted. This is Conotoxin VnMKLT1-021 from Conus ventricosus (Mediterranean cone).